Here is a 29-residue protein sequence, read N- to C-terminus: Glucagon (29 aa).

Belongs to the glucagon family.

Its subcellular location is the secreted. Functionally, glucagon plays a key role in glucose metabolism and homeostasis. Regulates blood glucose by increasing gluconeogenesis and decreasing glycolysis. The sequence is that of Glucagon (GCG) from Struthio camelus (Common ostrich).